We begin with the raw amino-acid sequence, 242 residues long: DNA repair protein RecO (242 aa).

It belongs to the RecO family.

Involved in DNA repair and RecF pathway recombination. This Paracoccus denitrificans (strain Pd 1222) protein is DNA repair protein RecO.